The following is a 313-amino-acid chain: Formimidoylglutamase (313 aa).

Mn(2+) is bound by residues His-130, Asp-155, His-157, Asp-159, Asp-241, and Asp-243.

This sequence belongs to the arginase family. Mn(2+) serves as cofactor.

The enzyme catalyses N-formimidoyl-L-glutamate + H2O = formamide + L-glutamate. It functions in the pathway amino-acid degradation; L-histidine degradation into L-glutamate; L-glutamate from N-formimidoyl-L-glutamate (hydrolase route): step 1/1. In terms of biological role, catalyzes the conversion of N-formimidoyl-L-glutamate to L-glutamate and formamide. This chain is Formimidoylglutamase, found in Salmonella enteritidis PT4 (strain P125109).